The primary structure comprises 446 residues: uncharacterized protein (446 aa).

Helical transmembrane passes span 69–89 (FWLWVVAATFAFFTGFSVTYL), 98–118 (FFLVLAGVLGMNTLMLAVWLA), 169–189 (HSLWLCTLLGMLVSVLLLLLV), and 247–267 (GLLVGSIACYGILPRLLAWVV).

It is found in the membrane. This is an uncharacterized protein from Neisseria meningitidis serogroup B (strain ATCC BAA-335 / MC58).